The primary structure comprises 466 residues: Neuropeptide Y receptor type 5 (466 aa).

Topologically, residues 1 to 63 are extracellular; the sequence is MEVKLEEHFN…YRGSVDDLQY (63 aa). 4 N-linked (GlcNAc...) asparagine glycosylation sites follow: Asn10, Asn17, Asn38, and Asn39. Residues 64–84 form a helical membrane-spanning segment; sequence FLIGLYTFVSLLGFMGNLLIL. At 85–98 the chain is on the cytoplasmic side; it reads MAVMKKRNQKTTVN. A helical transmembrane segment spans residues 99-119; it reads FLIGNLAFSDILVVLFCSPFT. Topologically, residues 120–138 are extracellular; sequence LTSVLLDQWMFGKAMCHIM. A disulfide bridge links Cys135 with Cys219. A helical membrane pass occupies residues 139 to 159; it reads PFLQCVSVLVSTLILISIAIV. Over 160–177 the chain is Cytoplasmic; that stretch reads RYHMIKHPISNNLTANHG. Residues 178 to 198 form a helical membrane-spanning segment; sequence YFLIATVWTLGFAICSPLPVF. The Extracellular segment spans residues 199 to 229; sequence HSLVELKETFGSALLSSKYLCVESWPSDSYR. A helical membrane pass occupies residues 230–250; it reads IAFTISLLLVQYILPLVCLTV. The Cytoplasmic segment spans residues 251–389; the sequence is SHTSVCRSIS…KKRSRSVFYR (139 aa). The segment at 323–346 is disordered; it reads GPSQEKHLTVPENPGSVRSQLSPS. A helical transmembrane segment spans residues 390-410; the sequence is LTILILVFAVSWMPLHVFHVV. Residues 411-427 are Extracellular-facing; sequence TDFNDNLISNRHFKLVY. The helical transmembrane segment at 428-448 threads the bilayer; that stretch reads CICHLLGMMSCCLNPILYGFL. Residues 449 to 466 lie on the Cytoplasmic side of the membrane; that stretch reads NNGIKADLRALIHCLHMS. Cys462 carries the S-palmitoyl cysteine lipid modification.

It belongs to the G-protein coupled receptor 1 family.

The protein resides in the cell membrane. Functionally, receptor for neuropeptide Y and peptide YY. The activity of this receptor is mediated by G proteins that inhibit adenylate cyclase activity. Seems to be associated with food intake. Could be involved in feeding disorders. In Mus musculus (Mouse), this protein is Neuropeptide Y receptor type 5 (Npy5r).